The chain runs to 127 residues: CST complex subunit TEN1 (127 aa).

It belongs to the TEN1 family. In terms of assembly, component of the CST complex, composed of CTC1, TEN1 and STN1. Interacts with STN1. No interaction with POT1A, but competes with it for STN1 binding. Ubiquitous. High expression in meristematic tissues and in vasculature.

It is found in the nucleus. The protein localises to the chromosome. Its subcellular location is the telomere. In terms of biological role, required for the maintenance of meristems and stem cells through the reduction of DNA damage. Promotes telomere integrity by maintaining telomere length and proper architecture of the chromosome terminus. Negatively regulates telomerase repeat addition processivity. Hampers contacts between enzymatically active telomerase and CST complex. In Arabidopsis thaliana (Mouse-ear cress), this protein is CST complex subunit TEN1.